The following is a 417-amino-acid chain: MASSKLREPVDEVFDLDLAVPETTRLDSSLHKARAQLLAKGRRHRPSRSRLRDSASSAEDGEGSDGPGGKVTDGCGSPLHRLRSPLHSGPGSPASGSFCLEPPGLRRSLDEDEPPPSPLARYRPLHNAASHEGLAATSGSPPRSAPSSDSSPSFVRRYPRAEPHSEDDSRDASPPEPASPTIGLDKKTRRKFLDLGVTLRRASTSRSRKEKGSNRLSMGSRESVEGSGRTGSSPFLPFSWFTDSGKGSASSGSTTSPTCSPKHEGFSPKKSASQESTLSDDSTPPSSSPKIPGGPRQETKCSYPYHTLSQSSDEFLDESLPAVQHWTSQQVGQWLHSLNLEQYAAEFAARQVDGPQLLQLDGSKLKSLGLSNSHDRALVKRKLKELAAAAEKERKAQEKTAKQREKLRRRENDAKKS.

The tract at residues 36-302 is disordered; that stretch reads QLLAKGRRHR…GGPRQETKCS (267 aa). The segment covering 40–49 has biased composition (basic residues); the sequence is KGRRHRPSRS. A phosphoserine mark is found at serine 84 and serine 108. Low complexity predominate over residues 138-153; it reads SGSPPRSAPSSDSSPS. Basic and acidic residues predominate over residues 159–173; the sequence is PRAEPHSEDDSRDAS. Serine 173 and serine 179 each carry phosphoserine. Low complexity-rich tracts occupy residues 244 to 260 and 276 to 289; these read SGKG…PTCS and STLS…SSSP. Serine 279 is subject to Phosphoserine. Threonine 283 carries the post-translational modification Phosphothreonine. One can recognise an SAM domain in the interval 326 to 389; it reads WTSQQVGQWL…KRKLKELAAA (64 aa). Residues 375 to 416 adopt a coiled-coil conformation; sequence DRALVKRKLKELAAAAEKERKAQEKTAKQREKLRRRENDAKK. Residues 390–417 are disordered; it reads AEKERKAQEKTAKQREKLRRRENDAKKS.

The chain is Sterile alpha motif domain-containing protein 14 (Samd14) from Mus musculus (Mouse).